Here is a 626-residue protein sequence, read N- to C-terminus: Nuclear RNA export factor 1 (626 aa).

Positions 1-16 are enriched in basic and acidic residues; it reads MADEGKSYSEHDDERV. The tract at residues 1–85 is disordered; that stretch reads MADEGKSYSE…TTRPNRRGDA (85 aa). The residue at position 2 (Ala2) is an N-acetylalanine. Residues 2 to 60 form a minor non-specific RNA-binding region; it reads ADEGKSYSEHDDERVNFPQRKKKGRGPFRWKYGEGNRRSGRGGSGIRSSRLEEDDGDVA. The segment at 2-118 is RNA-binding (RBD); it reads ADEGKSYSEH…GTSQDGTSKN (117 aa). The segment at 2-198 is interaction with ALYREF/THOC4 and LUZP4; that stretch reads ADEGKSYSEH…IIINPSAPPH (197 aa). A Phosphoserine modification is found at Ser9. Residues 20–29 are compositionally biased toward basic residues; the sequence is QRKKKGRGPF. At Arg42 the chain carries Asymmetric dimethylarginine; alternate. At Arg42 the chain carries Omega-N-methylarginine; alternate. A major non-specific RNA-binding region spans residues 61–118; the sequence is MSDAQDGPRVRYNPYTTRPNRRGDAWHDRDRIHVTVRRDRAPPERGGAGTSQDGTSKN. Positions 61-118 are RNA binding; the sequence is MSDAQDGPRVRYNPYTTRPNRRGDAWHDRDRIHVTVRRDRAPPERGGAGTSQDGTSKN. Residues 67–100 carry the Nuclear localization signal motif; sequence GPRVRYNPYTTRPNRRGDAWHDRDRIHVTVRRDR. The Nuclear export signal motif lies at 83–110; it reads GDAWHDRDRIHVTVRRDRAPPERGGAGT. The RRM domain occupies 119–198; sequence WFKITIPYGR…IIINPSAPPH (80 aa). Residue Tyr126 is modified to 3'-nitrotyrosine. LRR repeat units follow at residues 266 to 291, 292 to 315, 316 to 350, and 351 to 378; these read ELLS…QKVP, NLKI…IKGL, KLEE…AIRE, and RFPK…TTLP. An NTF2 domain is found at 393 to 543; it reads LVLHFLQQYY…LCIVNDELFV (151 aa). Residues 572-626 form the TAP-C domain; that stretch reads PEQQEMLQAFSTQSGMNLEWSQKCLQDNNWDYTRSAQAFTHLKAKGEIPEVAFMK.

This sequence belongs to the NXF family. As to quaternary structure, heterodimer (via NTF2 domain) with NXT1. The formation of NXF1-NXT1 heterodimers is required for the NXF1-mediated nuclear mRNA export. Forms a complex with RANBP2/NUP358, NXT1 and RANGAP1. Associates with the exon junction complex (EJC) and with the transcription/export (TREX) complex. Found in a mRNA complex with UPF3A and UPF3B. Found in a post-splicing complex with RBM8A, UPF1, UPF2, UPF3A, UPF3B and RNPS1. Interacts (via N-terminus) with DHX9 (via N-terminus); this interaction is direct and negatively regulates NXF1-mediated nuclear export of constitutive transport element (CTE)-containing cellular mRNAs. Interacts with ALYREF/THOC4. Interacts with FYTTD1/UIF. Interacts with EIF4A3. Interacts with NUPL2. Interacts with THOC5. Interacts with CHTOP. Interacts with FRG1 (via N-terminus). Interacts with LUZP4. Interacts with FMR1; the interaction occurs in a mRNA-dependent and polyribosomes-independent manner in the nucleus. Interacts with CPSF6 (via N-terminus); this interaction is direct. Interacts with RBM15. Interacts with RBM15B. Interacts with MCM3AP; this interaction is not mediated by RNA.

The protein localises to the nucleus. The protein resides in the nucleoplasm. Its subcellular location is the nucleus speckle. It is found in the cytoplasm. Involved in the nuclear export of mRNA species bearing retroviral constitutive transport elements (CTE) and in the export of mRNA from the nucleus to the cytoplasm (TAP/NFX1 pathway). The NXF1-NXT1 heterodimer is involved in the export of HSP70 mRNA in conjunction with ALYREF/THOC4 and THOC5 components of the TREX complex. ALYREF/THOC4-bound mRNA is thought to be transferred to the NXF1-NXT1 heterodimer for export. Also involved in nuclear export of m6A-containing mRNAs: interaction between SRSF3 and YTHDC1 facilitates m6A-containing mRNA-binding to both SRSF3 and NXF1, promoting mRNA nuclear export. In Pongo abelii (Sumatran orangutan), this protein is Nuclear RNA export factor 1 (NXF1).